A 324-amino-acid chain; its full sequence is Malate dehydrogenase (324 aa).

Residues 20–25 (GAGNVG) and Asp44 each bind NAD(+). Arg93 and Arg99 together coordinate substrate. NAD(+) is bound by residues Asn106 and 129–131 (VTN). 2 residues coordinate substrate: Asn131 and Arg162. His186 acts as the Proton acceptor in catalysis.

Belongs to the LDH/MDH superfamily. MDH type 3 family.

The enzyme catalyses (S)-malate + NAD(+) = oxaloacetate + NADH + H(+). In terms of biological role, catalyzes the reversible oxidation of malate to oxaloacetate. This chain is Malate dehydrogenase, found in Synechocystis sp. (strain ATCC 27184 / PCC 6803 / Kazusa).